Reading from the N-terminus, the 378-residue chain is Putative glutamate--cysteine ligase 2-1 (378 aa).

It belongs to the glutamate--cysteine ligase type 2 family. YbdK subfamily.

It carries out the reaction L-cysteine + L-glutamate + ATP = gamma-L-glutamyl-L-cysteine + ADP + phosphate + H(+). In terms of biological role, ATP-dependent carboxylate-amine ligase which exhibits weak glutamate--cysteine ligase activity. In Corynebacterium efficiens (strain DSM 44549 / YS-314 / AJ 12310 / JCM 11189 / NBRC 100395), this protein is Putative glutamate--cysteine ligase 2-1.